The chain runs to 249 residues: MADS-box transcription factor 18 (249 aa).

The region spanning 1–61 (MGRGPVQLRR…GKLYEFSSHS (61 aa)) is the MADS-box domain. The K-box domain occupies 88–179 (QENWGDEYGI…KLMETEKEKN (92 aa)). The disordered stretch occupies residues 184-249 (NTNREEQNGA…PPWMLRTSHT (66 aa)). The segment covering 210–236 (PTTNNSQSQPRGSGESEAQPSPAQAGN) has biased composition (polar residues).

Widely expressed. Transcripts accumulate to higher levels in organs that retain meristematic characteristics: in the apical meristem and in the meristematic leaf primordia formed on its flank; in the developing panicle at the early stage of rachis-branch primordia differentiation; in the procambium of the rachis branches and in all floral organ primordia.

The protein localises to the nucleus. Functionally, probable transcription factor. In Oryza sativa subsp. indica (Rice), this protein is MADS-box transcription factor 18 (MADS18).